A 133-amino-acid polypeptide reads, in one-letter code: Ribosome-binding factor A (133 aa).

Belongs to the RbfA family. In terms of assembly, monomer. Binds 30S ribosomal subunits, but not 50S ribosomal subunits or 70S ribosomes.

Its subcellular location is the cytoplasm. In terms of biological role, one of several proteins that assist in the late maturation steps of the functional core of the 30S ribosomal subunit. Associates with free 30S ribosomal subunits (but not with 30S subunits that are part of 70S ribosomes or polysomes). Required for efficient processing of 16S rRNA. May interact with the 5'-terminal helix region of 16S rRNA. The polypeptide is Ribosome-binding factor A (Bordetella pertussis (strain Tohama I / ATCC BAA-589 / NCTC 13251)).